Here is a 452-residue protein sequence, read N- to C-terminus: Cobyrinate a,c-diamide synthase (452 aa).

The GATase cobBQ-type domain occupies 244–437; the sequence is KIAYAYDEAF…VHINLYTYKE (194 aa). Residue cysteine 327 is the Nucleophile of the active site.

It belongs to the CobB/CbiA family. Mg(2+) serves as cofactor.

It catalyses the reaction cob(II)yrinate + 2 L-glutamine + 2 ATP + 2 H2O = cob(II)yrinate a,c diamide + 2 L-glutamate + 2 ADP + 2 phosphate + 2 H(+). It functions in the pathway cofactor biosynthesis; adenosylcobalamin biosynthesis; cob(II)yrinate a,c-diamide from sirohydrochlorin (anaerobic route): step 10/10. In terms of biological role, catalyzes the ATP-dependent amidation of the two carboxylate groups at positions a and c of cobyrinate, using either L-glutamine or ammonia as the nitrogen source. This chain is Cobyrinate a,c-diamide synthase, found in Caldanaerobacter subterraneus subsp. tengcongensis (strain DSM 15242 / JCM 11007 / NBRC 100824 / MB4) (Thermoanaerobacter tengcongensis).